The primary structure comprises 430 residues: Maintenance of mitochondrial morphology protein 1 (430 aa).

Residues Met1 to Gly82 are Lumenal-facing. A helical transmembrane segment spans residues Leu83–Phe103. Over Ala104–Leu430 the chain is Cytoplasmic. Composition is skewed to basic and acidic residues over residues Arg126 to Asn138 and Glu335 to Lys346. 2 disordered regions span residues Arg126–Glu154 and Gln315–Lys346. Residues Ala178–Pro408 form the SMP-LTD domain.

The protein belongs to the MMM1 family. As to quaternary structure, homodimer. Component of the ER-mitochondria encounter structure (ERMES) or MDM complex, composed of MMM1, MDM10, MDM12 and MDM34. An MMM1 homodimer associates with one molecule of MDM12 on each side in a pairwise head-to-tail manner, and the SMP-LTD domains of MMM1 and MDM12 generate a continuous hydrophobic tunnel for phospholipid trafficking.

Its subcellular location is the endoplasmic reticulum membrane. Its function is as follows. Component of the ERMES/MDM complex, which serves as a molecular tether to connect the endoplasmic reticulum (ER) and mitochondria. Components of this complex are involved in the control of mitochondrial shape and protein biogenesis, and function in nonvesicular lipid trafficking between the ER and mitochondria. The MDM12-MMM1 subcomplex functions in the major beta-barrel assembly pathway that is responsible for biogenesis of all outer membrane beta-barrel proteins, and acts in a late step after the SAM complex. The MDM10-MDM12-MMM1 subcomplex further acts in the TOM40-specific pathway after the action of the MDM12-MMM1 complex. Essential for establishing and maintaining the structure of mitochondria and maintenance of mtDNA nucleoids. In Lodderomyces elongisporus (strain ATCC 11503 / CBS 2605 / JCM 1781 / NBRC 1676 / NRRL YB-4239) (Yeast), this protein is Maintenance of mitochondrial morphology protein 1.